The following is a 260-amino-acid chain: Proteasome subunit alpha (260 aa).

The protein belongs to the peptidase T1A family. The 20S proteasome core is composed of 14 alpha and 14 beta subunits that assemble into four stacked heptameric rings, resulting in a barrel-shaped structure. The two inner rings, each composed of seven catalytic beta subunits, are sandwiched by two outer rings, each composed of seven alpha subunits. The catalytic chamber with the active sites is on the inside of the barrel. Has a gated structure, the ends of the cylinder being occluded by the N-termini of the alpha-subunits. Is capped at one or both ends by the proteasome regulatory ATPase, PAN.

Its subcellular location is the cytoplasm. Its activity is regulated as follows. The formation of the proteasomal ATPase PAN-20S proteasome complex, via the docking of the C-termini of PAN into the intersubunit pockets in the alpha-rings, triggers opening of the gate for substrate entry. Interconversion between the open-gate and close-gate conformations leads to a dynamic regulation of the 20S proteasome proteolysis activity. In terms of biological role, component of the proteasome core, a large protease complex with broad specificity involved in protein degradation. The sequence is that of Proteasome subunit alpha from Thermococcus gammatolerans (strain DSM 15229 / JCM 11827 / EJ3).